The sequence spans 261 residues: Caveolae-associated protein 3 (261 aa).

The segment at 1–84 (MRESALERGP…SNTLAQLLAK (84 aa)) is interaction with CAVIN1. Residues 20 to 78 (VHAVTVVTLLEKLASMLETLRERQGGLARRQGGLAGSVRRIQSGLGALSRSHDTTSNTL) form a leucine-zipper region. Residues Ser-62 and Ser-70 each carry the phosphoserine modification. Lys-128 participates in a covalent cross-link: Glycyl lysine isopeptide (Lys-Gly) (interchain with G-Cter in SUMO2). The interaction with CAV1 stretch occupies residues 135 to 203 (ASAFQKAPEP…SGRKGPAAPP (69 aa)). Residues 139–261 (QKAPEPLGPA…EALLQMESVA (123 aa)) are disordered. Over residues 158-170 (LEAEVGESSDEEP) the composition is skewed to acidic residues. 3 positions are modified to phosphoserine: Ser-165, Ser-166, and Ser-173. Over residues 200–212 (AAPPPTPVKPPRL) the composition is skewed to pro residues. Low complexity predominate over residues 213–231 (GPGRSAEAQPEAQPALEPT).

Belongs to the CAVIN family. As to quaternary structure, component of the CAVIN complex composed of CAVIN1, CAVIN2, CAVIN3 and CAVIN4. Interacts with PRKCD and with phosphatidylserine. Phosphatidylserine may form a bridge between PKC and PKC-binding partners and stabilize the binding. Interacts with PER2. Interacts with CAVIN1. Interacts (via leucine-zipper domain) with CAV1 in a cholesterol-sensitive manner. Interacts with EPS15L1. In terms of processing, in vitro, phosphorylated by PRKCD. Skeletal muscle, liver, stomach, lung, kidney and heart (at protein level). Strongly expressed in mammary and epithelial cells.

The protein resides in the cytoplasm. The protein localises to the membrane. It is found in the caveola. Its subcellular location is the cytosol. Its function is as follows. Regulates the traffic and/or budding of caveolae. Plays a role in caveola formation in a tissue-specific manner. Required for the formation of caveolae in smooth muscle but not in the lung and heart endothelial cells. Regulates the equilibrium between cell surface-associated and cell surface-dissociated caveolae by promoting the rapid release of caveolae from the cell surface. Plays a role in the regulation of the circadian clock. Modulates the period length and phase of circadian gene expression and also regulates expression and interaction of the core clock components PER1/2 and CRY1/2. The sequence is that of Caveolae-associated protein 3 from Homo sapiens (Human).